A 331-amino-acid polypeptide reads, in one-letter code: tRNA-cytidine(32) 2-sulfurtransferase (331 aa).

The interval 1–31 (MNAPHMNDTTADAATLDATAAPAGRPALTRR) is disordered. The segment covering 8–23 (DTTADAATLDATAAPA) has biased composition (low complexity). The PP-loop motif signature appears at 71–76 (SGGKDS). Positions 146, 149, and 237 each coordinate [4Fe-4S] cluster.

The protein belongs to the TtcA family. In terms of assembly, homodimer. Mg(2+) is required as a cofactor. The cofactor is [4Fe-4S] cluster.

It localises to the cytoplasm. The enzyme catalyses cytidine(32) in tRNA + S-sulfanyl-L-cysteinyl-[cysteine desulfurase] + AH2 + ATP = 2-thiocytidine(32) in tRNA + L-cysteinyl-[cysteine desulfurase] + A + AMP + diphosphate + H(+). It participates in tRNA modification. In terms of biological role, catalyzes the ATP-dependent 2-thiolation of cytidine in position 32 of tRNA, to form 2-thiocytidine (s(2)C32). The sulfur atoms are provided by the cysteine/cysteine desulfurase (IscS) system. The sequence is that of tRNA-cytidine(32) 2-sulfurtransferase from Burkholderia lata (strain ATCC 17760 / DSM 23089 / LMG 22485 / NCIMB 9086 / R18194 / 383).